The primary structure comprises 352 residues: Geranylgeranyl transferase type-1 subunit beta (352 aa).

PFTB repeat units lie at residues 135-180, 187-228, 236-276, and 283-325; these read VNKK…FILD, KESA…SLLG, FKEQ…MMID, and FASI…SFGN. Geranylgeranyl diphosphate-binding positions include 213–215 and 255–258; these read HGG and RTNK. 2 residues coordinate Zn(2+): D261 and C263. 264–267 is a binding site for geranylgeranyl diphosphate; the sequence is YAFW. H313 contacts Zn(2+).

Belongs to the protein prenyltransferase subunit beta family. In terms of assembly, heterodimer of an alpha and a beta subunit. Zn(2+) serves as cofactor. Requires Mg(2+) as cofactor.

The enzyme catalyses geranylgeranyl diphosphate + L-cysteinyl-[protein] = S-geranylgeranyl-L-cysteinyl-[protein] + diphosphate. In terms of biological role, catalyzes the transfer of a geranyl-geranyl moiety from geranyl-geranyl pyrophosphate to a cysteine at the fourth position from the C-terminus of proteins having the C-terminal sequence Cys-aliphatic-aliphatic-X. The polypeptide is Geranylgeranyl transferase type-1 subunit beta (pggt1b) (Dictyostelium discoideum (Social amoeba)).